We begin with the raw amino-acid sequence, 138 residues long: MISYQTEGVKMPDIKKKETTGWIKEVAACYGKRVGEIAYIFCSDDKILEVNRQYLQHDYYTDIITFDYCEGDRISGDLFISLDTVRSNAEQFEQPYDRELHRVIIHGILHLCGINDKGPGEREIMEAAENKALALISL.

The Zn(2+) site is built by His106, His110, and Asp116.

Belongs to the endoribonuclease YbeY family. Zn(2+) is required as a cofactor.

The protein resides in the cytoplasm. In terms of biological role, single strand-specific metallo-endoribonuclease involved in late-stage 70S ribosome quality control and in maturation of the 3' terminus of the 16S rRNA. The polypeptide is Endoribonuclease YbeY (Phocaeicola vulgatus (strain ATCC 8482 / DSM 1447 / JCM 5826 / CCUG 4940 / NBRC 14291 / NCTC 11154) (Bacteroides vulgatus)).